The primary structure comprises 279 residues: Bifunctional protein FolD (279 aa).

NADP(+) contacts are provided by residues 159-161, Ser-184, and Thr-225; that span reads GRS.

This sequence belongs to the tetrahydrofolate dehydrogenase/cyclohydrolase family. In terms of assembly, homodimer.

It carries out the reaction (6R)-5,10-methylene-5,6,7,8-tetrahydrofolate + NADP(+) = (6R)-5,10-methenyltetrahydrofolate + NADPH. The catalysed reaction is (6R)-5,10-methenyltetrahydrofolate + H2O = (6R)-10-formyltetrahydrofolate + H(+). Its pathway is one-carbon metabolism; tetrahydrofolate interconversion. In terms of biological role, catalyzes the oxidation of 5,10-methylenetetrahydrofolate to 5,10-methenyltetrahydrofolate and then the hydrolysis of 5,10-methenyltetrahydrofolate to 10-formyltetrahydrofolate. The chain is Bifunctional protein FolD from Methanospirillum hungatei JF-1 (strain ATCC 27890 / DSM 864 / NBRC 100397 / JF-1).